A 583-amino-acid chain; its full sequence is Aspartate--tRNA ligase (583 aa).

Glutamate 169 contacts L-aspartate. The tract at residues 193–196 (QLFK) is aspartate. Residue arginine 215 coordinates L-aspartate. ATP-binding positions include 215-217 (RDE) and glutamine 224. L-aspartate is bound at residue histidine 443. Glutamate 477 serves as a coordination point for ATP. Arginine 484 provides a ligand contact to L-aspartate. 529-532 (GIDR) contacts ATP.

Belongs to the class-II aminoacyl-tRNA synthetase family. Type 1 subfamily. In terms of assembly, homodimer.

Its subcellular location is the cytoplasm. It carries out the reaction tRNA(Asp) + L-aspartate + ATP = L-aspartyl-tRNA(Asp) + AMP + diphosphate. In terms of biological role, catalyzes the attachment of L-aspartate to tRNA(Asp) in a two-step reaction: L-aspartate is first activated by ATP to form Asp-AMP and then transferred to the acceptor end of tRNA(Asp). The polypeptide is Aspartate--tRNA ligase (Stenotrophomonas maltophilia (strain K279a)).